A 143-amino-acid polypeptide reads, in one-letter code: Nitrosuccinic acid decarboxylase npaB (143 aa).

The protein belongs to the carboxymuconolactone decarboxylase family. Requires Mg(2+) as cofactor.

It functions in the pathway mycotoxin biosynthesis. In terms of biological role, nitrosuccinic acid decarboxylase; part of the gene cluster that mediates the biosynthesis of the deadly neurotoxic nitroalkane 3-nitropropanoic acid (3-NPA) that acts as an antimetabolite of succinate and irreversibly inhibits succinate dehydrogenase and disrupts mitochondrial oxidative phosphorylation. NpaB facilitates decarboxylation of nitrosuccinic acid produced by the nitrosuccinic acid synthase npaA to yield the final product of the cluster, the lethal mycotoxin 3-NPA. The polypeptide is Nitrosuccinic acid decarboxylase npaB (Metarhizium robertsii (strain ARSEF 23 / ATCC MYA-3075) (Metarhizium anisopliae (strain ARSEF 23))).